We begin with the raw amino-acid sequence, 376 residues long: Actin-related protein T1 (376 aa).

The protein belongs to the actin family.

The protein localises to the cytoplasm. It localises to the cytoskeleton. Its subcellular location is the nucleus. The protein resides in the cytoplasmic vesicle. It is found in the secretory vesicle. The protein localises to the acrosome. Negatively regulates the Hedgehog (SHH) signaling. Binds to the promoter of the SHH signaling mediator, GLI1, and inhibits its expression. This chain is Actin-related protein T1 (Actrt1), found in Mus musculus (Mouse).